We begin with the raw amino-acid sequence, 345 residues long: RDS/peripherin-like protein xRDS36 (345 aa).

At 1 to 24 (MVLFKAKFSFQRRVKLAQTLWLLS) the chain is on the cytoplasmic side. A helical transmembrane segment spans residues 25 to 43 (WLSVLVGCLTFGMGIFLKV). Over 44–61 (QLWIHNEVMDNTTAHAVP) the chain is Lumenal. Asparagine 54 carries an N-linked (GlcNAc...) asparagine glycan. The helical transmembrane segment at 62 to 80 (NTVITAGLVGILLGYFAGK) threads the bilayer. Over 81–99 (ISQASMDLTKYQRWKSFMM) the chain is Cytoplasmic. A helical membrane pass occupies residues 100 to 123 (PFFFLAILSCIVCLAALVLSVALR). Residues 124–264 (GTLEESLKIG…LGYYTGIMAT (141 aa)) are Lumenal-facing. Asparagine 229 carries N-linked (GlcNAc...) asparagine glycosylation. Residues 265-290 (NGAAVTLSFLLQASVLVSLRYVQTSM) traverse the membrane as a helical segment. Residues 291-345 (DKIRDPDDVEADTEGFLLEKGVMETVNSSLEKIKDLFKSNQVETAEGGGEGAAGS) are Cytoplasmic-facing.

It belongs to the PRPH2/ROM1 family. In terms of assembly, homodimer; disulfide-linked. As to expression, rod specific.

It localises to the membrane. The polypeptide is RDS/peripherin-like protein xRDS36 (rds36) (Xenopus laevis (African clawed frog)).